Reading from the N-terminus, the 463-residue chain is Proton-coupled folate transporter (463 aa).

Residues 1-27 (MVSPDDSPEIRDRPRPRRCLLPASVTV) are Cytoplasmic-facing. The helical transmembrane segment at 28 to 46 (EPVIFLSMFALALQGPLAT) threads the bilayer. At 47–86 (QYLWDRLSADIGFNGTRTVGCAMNGSKSAGPEQQEVETLT) the chain is on the extracellular side. Residues asparagine 60 and asparagine 70 are each glycosylated (N-linked (GlcNAc...) asparagine). Cysteine 67 and cysteine 302 are joined by a disulfide. Residues 87–112 (AHWSLYINLGGFLVGLFSVMLLGPWS) traverse the membrane as a helical segment. Residues 113-116 (DKVG) lie on the Cytoplasmic side of the membrane. The chain crosses the membrane as a helical span at residues 117–139 (RRPVLMLPCIGLALQAAVYLLVM). Residues 140–144 (YQELH) are Extracellular-facing. A helical transmembrane segment spans residues 145–158 (VGYFLIGRFISGIS). At 159 to 181 (GDFNMILAGCFAYIADVSDRQSR) the chain is on the cytoplasmic side. Residues aspartate 160 and glutamate 189 each coordinate H(+). A helical membrane pass occupies residues 182–207 (TFRVAVLEACLGIAGMVASIIGGHWR). Topologically, residues 208-212 (KAQGY) are extracellular. A helical membrane pass occupies residues 213 to 231 (INPFWLVFAVNLFTALYVY). At 232-270 (FCVEESVKDKKPARLFTHRHYQSFFRLFTVQGENNRRRK) the chain is on the cytoplasmic side. A helical membrane pass occupies residues 271–293 (LFLYSLALLVVVTVHMGAKNLFV). Histidine 285 is a binding site for H(+). Residues 294–306 (LYELSYPLCWDSD) lie on the Extracellular side of the membrane. Residues 307 to 329 (LIGYGSAAEHLTYLSSLAGLRLF) form a helical membrane-spanning segment. The Cytoplasmic segment spans residues 330 to 335 (QLCLAD). Residues 336–355 (SWVAEMGFISNISGLVVISL) form a helical membrane-spanning segment. Residues 356 to 359 (ASTT) are Extracellular-facing. The chain crosses the membrane as a helical span at residues 360 to 380 (PIMFTGYGLRFFAMATTPVIR). The Cytoplasmic portion of the chain corresponds to 381–392 (SKLSKMVEEGEQ). The chain crosses the membrane as a helical span at residues 393 to 418 (GALFSSVACVEGLSFLLATGLFNSLY). At 419–426 (PATLHFMK) the chain is on the extracellular side. The chain crosses the membrane as a helical span at residues 427–445 (GFPFLLGALLLLIPAGIIG). The Cytoplasmic portion of the chain corresponds to 446 to 463 (LIEVCEQKPMYSQFSEIS).

It belongs to the major facilitator superfamily. SLC46A family. Monomer.

It localises to the cell membrane. It is found in the apical cell membrane. The protein localises to the basolateral cell membrane. Its subcellular location is the endosome membrane. The protein resides in the cytoplasm. It carries out the reaction folate(in) + H(+)(in) = folate(out) + H(+)(out). The enzyme catalyses (6S)-5-methyl-5,6,7,8-tetrahydrofolate(in) + H(+)(in) = (6S)-5-methyl-5,6,7,8-tetrahydrofolate(out) + H(+)(out). It catalyses the reaction methotrexate(in) + H(+)(in) = methotrexate(out) + H(+)(out). The catalysed reaction is pemetrexed(in) + H(+)(in) = pemetrexed(out) + H(+)(out). In terms of biological role, proton-coupled folate symporter that mediates folate absorption using an H(+) gradient as a driving force. Involved in the intestinal absorption of folates at the brush-border membrane of the proximal jejunum, and the transport from blood to cerebrospinal fluid across the choroid plexus. Functions at acidic pH via alternate outward- and inward-open conformation states. Protonation of residues in the outward open state primes the protein for transport. Binding of folate promotes breaking of salt bridge network and subsequent closure of the extracellular gate, leading to the inward-open state and release of protons and folate. Also able to transport antifolate drugs, such as methotrexate and pemetrexed. Also acts as a lower-affinity, pH-independent heme carrier protein and constitutes the main importer of heme in the intestine. Imports heme in the retina and retinal pigment epithelium, in neurons of the hippocampus, in hepatocytes and in the renal epithelial cells. The protein is Proton-coupled folate transporter of Xenopus laevis (African clawed frog).